A 208-amino-acid polypeptide reads, in one-letter code: Uracil phosphoribosyltransferase (208 aa).

5-phospho-alpha-D-ribose 1-diphosphate-binding positions include R78, R103, and 130–138 (DPMLATGGT). Uracil contacts are provided by residues I193 and 198 to 200 (GDA). D199 is a 5-phospho-alpha-D-ribose 1-diphosphate binding site.

This sequence belongs to the UPRTase family. The cofactor is Mg(2+).

The enzyme catalyses UMP + diphosphate = 5-phospho-alpha-D-ribose 1-diphosphate + uracil. It participates in pyrimidine metabolism; UMP biosynthesis via salvage pathway; UMP from uracil: step 1/1. Its activity is regulated as follows. Allosterically activated by GTP. Its function is as follows. Catalyzes the conversion of uracil and 5-phospho-alpha-D-ribose 1-diphosphate (PRPP) to UMP and diphosphate. This Oleidesulfovibrio alaskensis (strain ATCC BAA-1058 / DSM 17464 / G20) (Desulfovibrio alaskensis) protein is Uracil phosphoribosyltransferase.